The primary structure comprises 419 residues: MPVRRRWYPPSSTAAQPSPDGGDVNTDDADACPSSRQQRPPSLPQHSAPIHHRRRVINSIDASGEVMEYGSSNDQRMQDMEIWPSDGGGVEEYDPWTAWLYKPHTVSVLLAGACLLIWASGVLHPEITSSHDKVIPIKRGVWAMIAVFLAYCTLQAPSTILIRPHPAVWRLVHGMAVVYLVALTFLLFQKRDDARQFMKHLHPGLGVELPERSYGSDCRMYVPENPTNRFINIQETLFDEFVIAHVLGWWGKAVMIRNQLLLWVLSVGFELMELTFRHMLPNFNECWWDSIILDIMICNWFGIWAGMHTVRYFDGKTYEWVGLSRQPSIMGKVKRSLCQFTPAKWDKDQWHPFMEPRRFIQVFCLCVGFMTVELNTFFLKFCLWIPPRNPLVVYRLILWWLIAIPAIREYNTYLQDRSS.

The interval 1–51 (MPVRRRWYPPSSTAAQPSPDGGDVNTDDADACPSSRQQRPPSLPQHSAPIH) is disordered. The segment covering 33–47 (PSSRQQRPPSLPQHS) has biased composition (low complexity). The next 7 membrane-spanning stretches (helical) occupy residues 103–123 (PHTV…SGVL), 142–162 (WAMI…TILI), 168–188 (VWRL…FLLF), 260–280 (LLLW…RHML), 287–307 (WWDS…WAGM), 359–379 (FIQV…TFFL), and 384–404 (WIPP…LIAI).

The protein belongs to the CDP-alcohol phosphatidyltransferase class-I family.

It localises to the endoplasmic reticulum membrane. The catalysed reaction is a CDP-1,2-diacyl-sn-glycerol + L-serine = a 1,2-diacyl-sn-glycero-3-phospho-L-serine + CMP + H(+). It participates in phospholipid metabolism; phosphatidylethanolamine biosynthesis; phosphatidylethanolamine from CDP-diacylglycerol: step 1/2. In terms of biological role, catalyzes a base-exchange reaction in which the polar head group of phosphatidylethanolamine (PE) or phosphatidylcholine (PC) is replaced by L-serine. The protein is CDP-diacylglycerol--serine O-phosphatidyltransferase 3 (PSS3) of Oryza sativa subsp. japonica (Rice).